The chain runs to 128 residues: Fatty acid binding protein 1-B.1 (128 aa).

Belongs to the calycin superfamily. Fatty-acid binding protein (FABP) family. In terms of tissue distribution, expressed in the yolk syncytial layer (YSL) and subsequently in the intestinal bulb in developing embryos and larvae. In adults, expressed in the intestine.

It is found in the cytoplasm. Its function is as follows. Binds free fatty acids and their coenzyme A derivatives, bilirubin, and some other small molecules in the cytoplasm. May be involved in intracellular lipid transport. The chain is Fatty acid binding protein 1-B.1 (fabp1b.1) from Danio rerio (Zebrafish).